The chain runs to 180 residues: GTP cyclohydrolase 1 (180 aa).

Residues Cys-71, His-74, and Cys-142 each coordinate Zn(2+).

Belongs to the GTP cyclohydrolase I family. Homomer.

The catalysed reaction is GTP + H2O = 7,8-dihydroneopterin 3'-triphosphate + formate + H(+). It functions in the pathway cofactor biosynthesis; 7,8-dihydroneopterin triphosphate biosynthesis; 7,8-dihydroneopterin triphosphate from GTP: step 1/1. The protein is GTP cyclohydrolase 1 of Helicobacter pylori (strain P12).